A 345-amino-acid chain; its full sequence is S-adenosylmethionine:tRNA ribosyltransferase-isomerase (345 aa).

This sequence belongs to the QueA family. As to quaternary structure, monomer.

It is found in the cytoplasm. The enzyme catalyses 7-aminomethyl-7-carbaguanosine(34) in tRNA + S-adenosyl-L-methionine = epoxyqueuosine(34) in tRNA + adenine + L-methionine + 2 H(+). It participates in tRNA modification; tRNA-queuosine biosynthesis. In terms of biological role, transfers and isomerizes the ribose moiety from AdoMet to the 7-aminomethyl group of 7-deazaguanine (preQ1-tRNA) to give epoxyqueuosine (oQ-tRNA). This chain is S-adenosylmethionine:tRNA ribosyltransferase-isomerase, found in Anaeromyxobacter sp. (strain K).